The primary structure comprises 341 residues: tRNA N6-adenosine threonylcarbamoyltransferase (341 aa).

Fe cation is bound by residues His-115 and His-119. Residues 137 to 141 (IVSGG), Asp-170, Gly-183, Asp-187, and Asn-276 each bind substrate. Asp-304 serves as a coordination point for Fe cation.

This sequence belongs to the KAE1 / TsaD family. It depends on Fe(2+) as a cofactor.

The protein resides in the cytoplasm. The enzyme catalyses L-threonylcarbamoyladenylate + adenosine(37) in tRNA = N(6)-L-threonylcarbamoyladenosine(37) in tRNA + AMP + H(+). Functionally, required for the formation of a threonylcarbamoyl group on adenosine at position 37 (t(6)A37) in tRNAs that read codons beginning with adenine. Is involved in the transfer of the threonylcarbamoyl moiety of threonylcarbamoyl-AMP (TC-AMP) to the N6 group of A37, together with TsaE and TsaB. TsaD likely plays a direct catalytic role in this reaction. The protein is tRNA N6-adenosine threonylcarbamoyltransferase of Staphylococcus aureus (strain USA300).